The primary structure comprises 562 residues: Potassium-transporting ATPase potassium-binding subunit (562 aa).

12 helical membrane-spanning segments follow: residues 6 to 26, 62 to 82, 132 to 152, 175 to 195, 253 to 273, 283 to 303, 327 to 347, 356 to 376, 379 to 399, 416 to 436, 483 to 503, and 524 to 544; these read FLLIASFMLVLFVLSRPLGGF, YALAILCFNLLGIVLLFVLLM, GLTVQNFLSAATGIAVAFALI, LYVLLPIALIIALIFVSQGVL, FVQMLAIFLIPCALCFAFGQV, LIWAMSLIFIVAVVVVMYAEL, FGILATSLYAVVTTAASCGAV, ALGGMIPLWLMQIGEVVFGGV, GLYGMLLFVLLTVFIAGLMIG, MTALAILVTPTIVLLGTALAL, LLLAAAMFIGRFGVILPVLAI, and GLLFIGLLIGTVLLVGALTFI.

It belongs to the KdpA family. In terms of assembly, the system is composed of three essential subunits: KdpA, KdpB and KdpC.

It localises to the cell inner membrane. In terms of biological role, part of the high-affinity ATP-driven potassium transport (or Kdp) system, which catalyzes the hydrolysis of ATP coupled with the electrogenic transport of potassium into the cytoplasm. This subunit binds the periplasmic potassium ions and delivers the ions to the membrane domain of KdpB through an intramembrane tunnel. The chain is Potassium-transporting ATPase potassium-binding subunit from Yersinia pestis bv. Antiqua (strain Antiqua).